The primary structure comprises 385 residues: V-type proton ATPase subunit C (385 aa).

The protein belongs to the V-ATPase C subunit family. In terms of assembly, V-ATPase is a heteromultimeric enzyme made up of two complexes: the ATP-hydrolytic V1 complex and the proton translocation V0 complex. The V1 complex consists of three catalytic AB heterodimers that form a heterohexamer, three peripheral stalks each consisting of EG heterodimers, one central rotor including subunits D and F, and the regulatory subunits C and H. The proton translocation complex V0 consists of the proton transport subunit a, a ring of proteolipid subunits c9c'', rotary subunit d, subunits e and f, and the accessory subunits vah-19/Ac45 and vah-20/PRR. Interacts with V-type proton ATPase subunits a1 unc-32, a2 vha-5 and a3 vha-6.

It localises to the cytoplasm. The protein localises to the membrane. Subunit of the V1 complex of vacuolar(H+)-ATPase (V-ATPase), a multisubunit enzyme composed of a peripheral complex (V1) that hydrolyzes ATP and a membrane integral complex (V0) that translocates protons. V-ATPase is responsible for acidifying and maintaining the pH of intracellular compartments and in some cell types, is targeted to the plasma membrane, where it is responsible for acidifying the extracellular environment. Subunit C is necessary for the assembly of the catalytic sector of the enzyme and is likely to have a specific function in its catalytic activity. Has roles in embryogenesis and ovulation. The sequence is that of V-type proton ATPase subunit C from Caenorhabditis briggsae.